A 366-amino-acid chain; its full sequence is N-acetyl-6-hydroxytryptophan oxidase ivoB (366 aa).

An N-terminal signal peptide occupies residues 1-18 (MHLLSSLAALAAAITVAF). 2 N-linked (GlcNAc...) asparagine glycosylation sites follow: N28 and N81. Cu cation-binding residues include H87 and H96. N-linked (GlcNAc...) asparagine glycosylation is found at N114 and N121. Residue H291 participates in Cu cation binding. An N-linked (GlcNAc...) asparagine glycan is attached at N319.

The protein belongs to the tyrosinase family. It depends on Cu(2+) as a cofactor.

The protein operates within pigment biosynthesis. Activity is inhibited by 2,3-dihydroxynaphthalene, phenylhydrazine, diethyl dithiocarbamate and 8-hydroxyquinolene. Nonribosomal peptide synthetase; part of the pathway that mediates the biosynthesis of the gray-brown conidiophore pigment. The first step of the pathway is performed by the nonribosomal peptide synthetase ivoA that catalyzes ATP-dependent unidirectional stereoinversion of L-tryptophan to D-tryptophan with complete conversion. While the stereoinversion is catalyzed by the epimerization (E) domain of ivoA, the terminal condensation (C) domain stereoselectively hydrolyzes D-tryptophanyl-S-phosphopantetheine thioester and thus represents a non-canonical C domain function. D-tryptophan is acetylated, probably by an endogenous acetyltransferase. N-acetyltryptophan is further 6-hydroxylated into N-acetyl-6-hydroxytryptophan (AHT) by the cytochrome P450 monooxygenase ivoC. N-acetyl-6-hydroxytryptophan is substrate of the N-acetyl-6-hydroxytryptophan oxidase ivoB to produce the gray-brown conidiophore pigment. This Emericella nidulans (strain FGSC A4 / ATCC 38163 / CBS 112.46 / NRRL 194 / M139) (Aspergillus nidulans) protein is N-acetyl-6-hydroxytryptophan oxidase ivoB.